The chain runs to 116 residues: MINKKSSNETRQKRHLRIRKHVIGTPDRPRLNVFRSNTAIYVQIINDETHNTLTSANTKELKVGANIEGAAALGKAVAEQALKLGITKVVFDRGGYLYHGRIKALADAARAAGLEF.

The protein belongs to the universal ribosomal protein uL18 family. As to quaternary structure, part of the 50S ribosomal subunit; part of the 5S rRNA/L5/L18/L25 subcomplex. Contacts the 5S and 23S rRNAs.

In terms of biological role, this is one of the proteins that bind and probably mediate the attachment of the 5S RNA into the large ribosomal subunit, where it forms part of the central protuberance. The polypeptide is Large ribosomal subunit protein uL18 (Acholeplasma laidlawii (strain PG-8A)).